A 218-amino-acid chain; its full sequence is Fucoxanthin-chlorophyll a-c binding protein, chloroplastic (218 aa).

A chloroplast-targeting transit peptide spans 1-36 (MFYSAAVAALMVGSASAFLAPAQFNSVAKSSGALSM).

The protein belongs to the fucoxanthin chlorophyll protein family. The LHC complex of chromophytic algae is composed of fucoxanthin, chlorophyll A and C bound non-covalently by fucoxanthin chlorophyll proteins (FCPs). The ratio of pigments in this LHC is; fucoxanthin: chlorophyll C: chlorophyll A; (0.6-1): (0.1-0.3): (1).

The protein resides in the plastid. It localises to the chloroplast thylakoid membrane. The light-harvesting complex (LHC) functions as a light receptor, it captures and delivers excitation energy to photosystems with which it is closely associated. Energy is transferred from the carotenoid and chlorophyll C (or B) to chlorophyll A and the photosynthetic reaction centers where it is used to synthesize ATP and reducing power. The protein is Fucoxanthin-chlorophyll a-c binding protein, chloroplastic of Chattonella marina var. antiqua (Red tide flagellate).